A 220-amino-acid polypeptide reads, in one-letter code: Cytidylate kinase (220 aa).

10-18 lines the ATP pocket; that stretch reads GPASSGKST.

This sequence belongs to the cytidylate kinase family. Type 1 subfamily.

Its subcellular location is the cytoplasm. The enzyme catalyses CMP + ATP = CDP + ADP. The catalysed reaction is dCMP + ATP = dCDP + ADP. The chain is Cytidylate kinase from Lactococcus lactis subsp. lactis (strain IL1403) (Streptococcus lactis).